The following is a 256-amino-acid chain: Imidazole glycerol phosphate synthase subunit HisF (256 aa).

Active-site residues include aspartate 12 and aspartate 131.

This sequence belongs to the HisA/HisF family. Heterodimer of HisH and HisF.

The protein localises to the cytoplasm. It carries out the reaction 5-[(5-phospho-1-deoxy-D-ribulos-1-ylimino)methylamino]-1-(5-phospho-beta-D-ribosyl)imidazole-4-carboxamide + L-glutamine = D-erythro-1-(imidazol-4-yl)glycerol 3-phosphate + 5-amino-1-(5-phospho-beta-D-ribosyl)imidazole-4-carboxamide + L-glutamate + H(+). It participates in amino-acid biosynthesis; L-histidine biosynthesis; L-histidine from 5-phospho-alpha-D-ribose 1-diphosphate: step 5/9. Functionally, IGPS catalyzes the conversion of PRFAR and glutamine to IGP, AICAR and glutamate. The HisF subunit catalyzes the cyclization activity that produces IGP and AICAR from PRFAR using the ammonia provided by the HisH subunit. The chain is Imidazole glycerol phosphate synthase subunit HisF from Renibacterium salmoninarum (strain ATCC 33209 / DSM 20767 / JCM 11484 / NBRC 15589 / NCIMB 2235).